Consider the following 101-residue polypeptide: Large ribosomal subunit protein eL30 (101 aa).

Belongs to the eukaryotic ribosomal protein eL30 family.

The chain is Large ribosomal subunit protein eL30 from Pyrobaculum islandicum (strain DSM 4184 / JCM 9189 / GEO3).